A 22-amino-acid chain; its full sequence is Fuctinin-1 (22 aa).

Residues 1–22 (SASPGLPKGEKEQQEAIEHIDE) are disordered. The segment covering 8 to 22 (KGEKEQQEAIEHIDE) has biased composition (basic and acidic residues).

It to human SET/PHAPII protein. Oligomer.

The protein resides in the cytoplasm. Functionally, has a role in the physiological regulation of fucosylation processes. This Rattus norvegicus (Rat) protein is Fuctinin-1.